A 115-amino-acid polypeptide reads, in one-letter code: Dolichyl-diphosphooligosaccharide--protein glycosyltransferase subunit DAD2 (115 aa).

At 1 to 31 (MVKSTSKDAQDLFHSLHSAYTATPTNLKIID) the chain is on the cytoplasmic side. The helical transmembrane segment at 32–52 (LYVCFAVFTALIQVAYMALVG) threads the bilayer. Residues 53-55 (SFP) lie on the Lumenal side of the membrane. The helical transmembrane segment at 56–76 (FNSFLSGVLSCIGTAVLAVCL) threads the bilayer. Over 77–94 (RIQVNKENKEFKDLAPER) the chain is Cytoplasmic. The helical transmembrane segment at 95 to 115 (AFADFVLCNLVLHLVIINFLG) threads the bilayer.

It belongs to the DAD/OST2 family. In terms of assembly, component of the oligosaccharyltransferase (OST) complex.

It is found in the endoplasmic reticulum membrane. Its pathway is protein modification; protein glycosylation. Functionally, subunit of the oligosaccharyl transferase (OST) complex that catalyzes the initial transfer of a defined glycan (Glc(3)Man(9)GlcNAc(2) in eukaryotes) from the lipid carrier dolichol-pyrophosphate to an asparagine residue within an Asn-X-Ser/Thr consensus motif in nascent polypeptide chains, the first step in protein N-glycosylation. N-glycosylation occurs cotranslationally and the complex associates with the Sec61 complex at the channel-forming translocon complex that mediates protein translocation across the endoplasmic reticulum (ER). All subunits are required for a maximal enzyme activity. This Arabidopsis thaliana (Mouse-ear cress) protein is Dolichyl-diphosphooligosaccharide--protein glycosyltransferase subunit DAD2 (DAD2).